Here is a 212-residue protein sequence, read N- to C-terminus: MAQTDKPTCIPPELPKMLKEFAKAAIRAQPQDLIQWGADYFEALSRGETPPVREQSERVALCNWAELTPEVLKILHSQVAGRLIVHAEELAQMWKVVNLPADLFNSVMNVGRFTEEIEWLKFLALACSALGVTITKTLKIVCEVLSCDHNGGLPRIPFSTFQFLYTYIAEVDGEISASHVSRMLNYIEQEVIGPDGLITVNDFTQNPRVWLE.

Residues 12–49 (PELPKMLKEFAKAAIRAQPQDLIQWGADYFEALSRGET) form the RIIa domain. Ser56 is subject to Phosphoserine. The segment at 209-212 (VWLE) is interaction with RHPN1.

It belongs to the ropporin family. In terms of assembly, homodimer. Interacts with AKAP3. May interact with SPA17. Interacts with RHPN1. Interacts with FSCB; the interaction increases upon spermatozoa capacitation conditions. Interacts with CFAP61. Post-translationally, sumoylated, sumoylation decreases upon spermatozoa capacitation conditions.

The protein localises to the cell projection. It is found in the cilium. Its subcellular location is the flagellum. In terms of biological role, important for male fertility. With ROPN1L, involved in fibrous sheath integrity and sperm motility, plays a role in PKA-dependent signaling processes required for spermatozoa capacitation. In Macaca fascicularis (Crab-eating macaque), this protein is Ropporin-1 (ROPN1).